Reading from the N-terminus, the 192-residue chain is RNA pyrophosphohydrolase (192 aa).

The Nudix hydrolase domain maps to 6 to 149 (GYRPNVGIVI…KKDVYRKVMK (144 aa)). A Nudix box motif is present at residues 38 to 59 (GGINDNETAEQAMYRELYEEAG).

The protein belongs to the Nudix hydrolase family. RppH subfamily. A divalent metal cation serves as cofactor.

Functionally, accelerates the degradation of transcripts by removing pyrophosphate from the 5'-end of triphosphorylated RNA, leading to a more labile monophosphorylated state that can stimulate subsequent ribonuclease cleavage. The sequence is that of RNA pyrophosphohydrolase from Histophilus somni (strain 129Pt) (Haemophilus somnus).